A 230-amino-acid chain; its full sequence is Cytochrome c oxidase subunit 2 (230 aa).

Residues 1–14 are Mitochondrial intermembrane-facing; the sequence is MAHPTQLGFQDAAS. A helical membrane pass occupies residues 15–45; that stretch reads PVMEELLHFHDHALMIVFLISALVLYVIITT. Over 46-59 the chain is Mitochondrial matrix; the sequence is VSTKLTNMYILDSQ. A helical transmembrane segment spans residues 60–87; it reads EIEIVWTVLPALILILIALPSLRILYLM. Residues 88–230 are Mitochondrial intermembrane-facing; it reads DEINDPHLTI…NWSTLMLKDA (143 aa). The Cu cation site is built by His-161, Cys-196, Glu-198, Cys-200, His-204, and Met-207. Glu-198 lines the Mg(2+) pocket.

The protein belongs to the cytochrome c oxidase subunit 2 family. In terms of assembly, component of the cytochrome c oxidase (complex IV, CIV), a multisubunit enzyme composed of 14 subunits. The complex is composed of a catalytic core of 3 subunits MT-CO1, MT-CO2 and MT-CO3, encoded in the mitochondrial DNA, and 11 supernumerary subunits COX4I, COX5A, COX5B, COX6A, COX6B, COX6C, COX7A, COX7B, COX7C, COX8 and NDUFA4, which are encoded in the nuclear genome. The complex exists as a monomer or a dimer and forms supercomplexes (SCs) in the inner mitochondrial membrane with NADH-ubiquinone oxidoreductase (complex I, CI) and ubiquinol-cytochrome c oxidoreductase (cytochrome b-c1 complex, complex III, CIII), resulting in different assemblies (supercomplex SCI(1)III(2)IV(1) and megacomplex MCI(2)III(2)IV(2)). Found in a complex with TMEM177, COA6, COX18, COX20, SCO1 and SCO2. Interacts with TMEM177 in a COX20-dependent manner. Interacts with COX20. Interacts with COX16. The cofactor is Cu cation.

The protein localises to the mitochondrion inner membrane. It carries out the reaction 4 Fe(II)-[cytochrome c] + O2 + 8 H(+)(in) = 4 Fe(III)-[cytochrome c] + 2 H2O + 4 H(+)(out). Component of the cytochrome c oxidase, the last enzyme in the mitochondrial electron transport chain which drives oxidative phosphorylation. The respiratory chain contains 3 multisubunit complexes succinate dehydrogenase (complex II, CII), ubiquinol-cytochrome c oxidoreductase (cytochrome b-c1 complex, complex III, CIII) and cytochrome c oxidase (complex IV, CIV), that cooperate to transfer electrons derived from NADH and succinate to molecular oxygen, creating an electrochemical gradient over the inner membrane that drives transmembrane transport and the ATP synthase. Cytochrome c oxidase is the component of the respiratory chain that catalyzes the reduction of oxygen to water. Electrons originating from reduced cytochrome c in the intermembrane space (IMS) are transferred via the dinuclear copper A center (CU(A)) of subunit 2 and heme A of subunit 1 to the active site in subunit 1, a binuclear center (BNC) formed by heme A3 and copper B (CU(B)). The BNC reduces molecular oxygen to 2 water molecules using 4 electrons from cytochrome c in the IMS and 4 protons from the mitochondrial matrix. The chain is Cytochrome c oxidase subunit 2 (mt-co2) from Formosania lacustris (Oriental stream loach).